Reading from the N-terminus, the 149-residue chain is Ribonuclease pancreatic (149 aa).

Residues 1–25 (MGLEKSLILFPLFVLLLGWVQPSLG) form the signal peptide. The interval 30–49 (AQKFERQHMDSSGSSNNSPT) is disordered. Substrate-binding residues include K32 and R35. The Proton acceptor role is filled by H37. A compositionally biased stretch (polar residues) spans 39–49 (DSSGSSNNSPT). 4 disulfide bridges follow: C51-C109, C65-C120, C83-C135, and C90-C97. 66 to 70 (KPVNT) provides a ligand contact to substrate. Residue N87 is glycosylated (N-linked (GlcNAc...) asparagine). K91 contacts substrate. H144 (proton donor) is an active-site residue.

The protein belongs to the pancreatic ribonuclease family. As to quaternary structure, monomer. Interacts with and forms tight 1:1 complexes with RNH1. Dimerization of two such complexes may occur. Interaction with RNH1 inhibits this protein. As to expression, pancreas.

It localises to the secreted. The enzyme catalyses an [RNA] containing cytidine + H2O = an [RNA]-3'-cytidine-3'-phosphate + a 5'-hydroxy-ribonucleotide-3'-[RNA].. It catalyses the reaction an [RNA] containing uridine + H2O = an [RNA]-3'-uridine-3'-phosphate + a 5'-hydroxy-ribonucleotide-3'-[RNA].. Endonuclease that catalyzes the cleavage of RNA on the 3' side of pyrimidine nucleotides. Acts on single-stranded and double-stranded RNA. The polypeptide is Ribonuclease pancreatic (Rnase1) (Mus pahari (Gairdner's shrew-mouse)).